The following is a 328-amino-acid chain: DNA-directed RNA polymerase subunit alpha (328 aa).

The tract at residues 1–231 (MIYQMQMPER…EHVSLFANFS (231 aa)) is alpha N-terminal domain (alpha-NTD). Residues 252-328 (MRKLLQTRIE…MDITKYQMKS (77 aa)) are alpha C-terminal domain (alpha-CTD).

This sequence belongs to the RNA polymerase alpha chain family. As to quaternary structure, homodimer. The RNAP catalytic core consists of 2 alpha, 1 beta, 1 beta' and 1 omega subunit. When a sigma factor is associated with the core the holoenzyme is formed, which can initiate transcription.

The enzyme catalyses RNA(n) + a ribonucleoside 5'-triphosphate = RNA(n+1) + diphosphate. Functionally, DNA-dependent RNA polymerase catalyzes the transcription of DNA into RNA using the four ribonucleoside triphosphates as substrates. In Prosthecochloris aestuarii (strain DSM 271 / SK 413), this protein is DNA-directed RNA polymerase subunit alpha.